The sequence spans 472 residues: N-succinylglutamate 5-semialdehyde dehydrogenase 1 (472 aa).

Residue 209–214 (GGVQAG) coordinates NAD(+). Catalysis depends on residues Glu232 and Cys266.

This sequence belongs to the aldehyde dehydrogenase family. AstD subfamily.

It carries out the reaction N-succinyl-L-glutamate 5-semialdehyde + NAD(+) + H2O = N-succinyl-L-glutamate + NADH + 2 H(+). Its pathway is amino-acid degradation; L-arginine degradation via AST pathway; L-glutamate and succinate from L-arginine: step 4/5. Its function is as follows. Catalyzes the NAD-dependent reduction of succinylglutamate semialdehyde into succinylglutamate. The chain is N-succinylglutamate 5-semialdehyde dehydrogenase 1 from Caulobacter vibrioides (strain ATCC 19089 / CIP 103742 / CB 15) (Caulobacter crescentus).